We begin with the raw amino-acid sequence, 168 residues long: Ribosome-binding factor A (168 aa).

The segment covering Arg125–Pro138 has biased composition (basic and acidic residues). The tract at residues Arg125 to Arg168 is disordered.

The protein belongs to the RbfA family. As to quaternary structure, monomer. Binds 30S ribosomal subunits, but not 50S ribosomal subunits or 70S ribosomes.

It localises to the cytoplasm. Its function is as follows. One of several proteins that assist in the late maturation steps of the functional core of the 30S ribosomal subunit. Associates with free 30S ribosomal subunits (but not with 30S subunits that are part of 70S ribosomes or polysomes). Required for efficient processing of 16S rRNA. May interact with the 5'-terminal helix region of 16S rRNA. This Mycolicibacterium gilvum (strain PYR-GCK) (Mycobacterium gilvum (strain PYR-GCK)) protein is Ribosome-binding factor A.